We begin with the raw amino-acid sequence, 109 residues long: Phosphoribosyl-ATP pyrophosphatase (109 aa).

This sequence belongs to the PRA-PH family.

The protein localises to the cytoplasm. The catalysed reaction is 1-(5-phospho-beta-D-ribosyl)-ATP + H2O = 1-(5-phospho-beta-D-ribosyl)-5'-AMP + diphosphate + H(+). It functions in the pathway amino-acid biosynthesis; L-histidine biosynthesis; L-histidine from 5-phospho-alpha-D-ribose 1-diphosphate: step 2/9. This Marinobacter nauticus (strain ATCC 700491 / DSM 11845 / VT8) (Marinobacter aquaeolei) protein is Phosphoribosyl-ATP pyrophosphatase.